Here is a 239-residue protein sequence, read N- to C-terminus: MSQFKSKEEAAESGVYIRKIQSFVKREGRLTKGQEKAIESNWETMGLEHKSGLLDMNEVFGRTAPVVLEIGFGMGKSLVTMAKNEPDKDFIGIEVHRPGIGACLADAQEQGVTNLRVYEHDAVEVLADCIADGSLSRMQLFFPDPWHKKRHHKRRIVQPEFVEKLRGKLAIGGVFHMATDWENYAEHMLEIMAVAPGYKNLSSTSDYVPRPEQRPLTKFEQRGHRLGHGVWDLMFERVA.

Glu-69, Glu-94, Asp-121, and Asp-144 together coordinate S-adenosyl-L-methionine. Asp-144 is a catalytic residue. Substrate-binding positions include Lys-148, Asp-180, and 217–220; that span reads TKFE.

This sequence belongs to the class I-like SAM-binding methyltransferase superfamily. TrmB family.

It carries out the reaction guanosine(46) in tRNA + S-adenosyl-L-methionine = N(7)-methylguanosine(46) in tRNA + S-adenosyl-L-homocysteine. It functions in the pathway tRNA modification; N(7)-methylguanine-tRNA biosynthesis. Catalyzes the formation of N(7)-methylguanine at position 46 (m7G46) in tRNA. In Pseudoalteromonas atlantica (strain T6c / ATCC BAA-1087), this protein is tRNA (guanine-N(7)-)-methyltransferase.